Consider the following 559-residue polypeptide: Formate--tetrahydrofolate ligase (559 aa).

68 to 75 provides a ligand contact to ATP; the sequence is TPAGEGKT.

Belongs to the formate--tetrahydrofolate ligase family.

The enzyme catalyses (6S)-5,6,7,8-tetrahydrofolate + formate + ATP = (6R)-10-formyltetrahydrofolate + ADP + phosphate. Its pathway is one-carbon metabolism; tetrahydrofolate interconversion. The chain is Formate--tetrahydrofolate ligase from Moorella thermoacetica (strain ATCC 39073 / JCM 9320).